Consider the following 82-residue polypeptide: Myrmicitoxin(1)-Pm3a (82 aa).

Positions 1–23 are cleaved as a signal peptide; that stretch reads MEIPKLLYIAVIAIGLSGSLTCA. Positions 24-59 are excised as a propeptide; the sequence is TPLANPLADPEAEAEAKATAEATAEAIAEALAEPEP. Leu81 bears the Leucine amide mark.

The protein belongs to the formicidae venom clade 1 family. As to expression, expressed by the venom gland.

The protein resides in the secreted. Toxin that causes a slowly developing temporary paralysis when intrathoracically injected into insects (blowflies). Does not cause spontaneous nocifensive behaviors by intraplantar injection in mice. The sequence is that of Myrmicitoxin(1)-Pm3a from Pogonomyrmex maricopa (Maricopa harvester ant).